The primary structure comprises 292 residues: Protein/nucleic acid deglycase HchA (292 aa).

Residues 1 to 12 (MSQDVNELSKQP) show a composition bias toward polar residues. The segment at 1–23 (MSQDVNELSKQPTPDKAEDNAFF) is disordered. Catalysis depends on C190, which acts as the Nucleophile.

Belongs to the peptidase C56 family. HchA subfamily.

The protein localises to the cytoplasm. It catalyses the reaction N(omega)-(1-hydroxy-2-oxopropyl)-L-arginyl-[protein] + H2O = lactate + L-arginyl-[protein] + H(+). The enzyme catalyses N(6)-(1-hydroxy-2-oxopropyl)-L-lysyl-[protein] + H2O = lactate + L-lysyl-[protein] + H(+). It carries out the reaction S-(1-hydroxy-2-oxopropyl)-L-cysteinyl-[protein] + H2O = lactate + L-cysteinyl-[protein] + H(+). The catalysed reaction is N(omega)-(1-hydroxy-2-oxoethyl)-L-arginyl-[protein] + H2O = L-arginyl-[protein] + glycolate + H(+). It catalyses the reaction N(6)-(1-hydroxy-2-oxoethyl)-L-lysyl-[protein] + H2O = glycolate + L-lysyl-[protein] + H(+). The enzyme catalyses S-(1-hydroxy-2-oxoethyl)-L-cysteinyl-[protein] + H2O = glycolate + L-cysteinyl-[protein] + H(+). It carries out the reaction N(2)-(1-hydroxy-2-oxopropyl)-dGTP + H2O = lactate + dGTP + H(+). The catalysed reaction is N(2)-(1-hydroxy-2-oxopropyl)-GTP + H2O = lactate + GTP + H(+). It catalyses the reaction N(2)-(1-hydroxy-2-oxopropyl)-GDP + H2O = lactate + GDP + H(+). The enzyme catalyses N(2)-(1-hydroxy-2-oxopropyl)-GMP + H2O = lactate + GMP + H(+). It carries out the reaction N(2)-(1-hydroxy-2-oxoethyl)-dGTP + H2O = dGTP + glycolate + H(+). The catalysed reaction is N(2)-(1-hydroxy-2-oxoethyl)-GTP + H2O = glycolate + GTP + H(+). It catalyses the reaction N(2)-(1-hydroxy-2-oxoethyl)-GDP + H2O = glycolate + GDP + H(+). The enzyme catalyses N(2)-(1-hydroxy-2-oxoethyl)-GMP + H2O = glycolate + GMP + H(+). It carries out the reaction an N(2)-(1-hydroxy-2-oxopropyl)-guanosine in RNA + H2O = a guanosine in RNA + lactate + H(+). The catalysed reaction is an N(2)-(1-hydroxy-2-oxopropyl)-2'-deoxyguanosine in DNA + H2O = a 2'-deoxyguanosine in DNA + lactate + H(+). It catalyses the reaction an N(2)-(1-hydroxy-2-oxoethyl)-guanosine in RNA + H2O = a guanosine in RNA + glycolate + H(+). The enzyme catalyses an N(2)-(1-hydroxy-2-oxoethyl)-2'-deoxyguanosine in DNA + H2O = a 2'-deoxyguanosine in DNA + glycolate + H(+). Protein and nucleotide deglycase that catalyzes the deglycation of the Maillard adducts formed between amino groups of proteins or nucleotides and reactive carbonyl groups of glyoxals. Thus, functions as a protein deglycase that repairs methylglyoxal- and glyoxal-glycated proteins, and releases repaired proteins and lactate or glycolate, respectively. Deglycates cysteine, arginine and lysine residues in proteins, and thus reactivates these proteins by reversing glycation by glyoxals. Acts on early glycation intermediates (hemithioacetals and aminocarbinols), preventing the formation of Schiff bases and advanced glycation endproducts (AGE). Also functions as a nucleotide deglycase able to repair glycated guanine in the free nucleotide pool (GTP, GDP, GMP, dGTP) and in DNA and RNA. Is thus involved in a major nucleotide repair system named guanine glycation repair (GG repair), dedicated to reversing methylglyoxal and glyoxal damage via nucleotide sanitization and direct nucleic acid repair. Plays an important role in protecting cells from carbonyl stress. The sequence is that of Protein/nucleic acid deglycase HchA from Staphylococcus aureus (strain Mu3 / ATCC 700698).